Consider the following 283-residue polypeptide: Eukaryotic translation initiation factor 3 subunit K (283 aa).

The PCI domain occupies 52 to 263; sequence YDLLANLAIL…EIKATVIREE (212 aa). The interval 114–135 is disordered; it reads EATTTDADNAGSLSGDDDDDEV.

It belongs to the eIF-3 subunit K family. As to quaternary structure, component of the eukaryotic translation initiation factor 3 (eIF-3) complex.

Its subcellular location is the cytoplasm. Functionally, component of the eukaryotic translation initiation factor 3 (eIF-3) complex, which is involved in protein synthesis of a specialized repertoire of mRNAs and, together with other initiation factors, stimulates binding of mRNA and methionyl-tRNAi to the 40S ribosome. The eIF-3 complex specifically targets and initiates translation of a subset of mRNAs involved in cell proliferation. The protein is Eukaryotic translation initiation factor 3 subunit K of Mycosarcoma maydis (Corn smut fungus).